Reading from the N-terminus, the 345-residue chain is MNTSQQQQQQQQQQQQQQQQQQQTPQQVENVSAFPPPPPFYKLYLNYKKDVDYSKPTTENSKKNDTPEGNESTIEKNIDNSDEMNIDNNNNNNNNNNNNNNNNNNNNNNNNNNNNNNNNNNNNNNNKATTSTNKKIELNKPLAPPLPPKVGANYVQFGQTYSTVDMLPSLDESGAKQLYPKGDIEPISELKKLNRSILFNYLQLLETLIENPKNYQSKIEDISLLFINFHHLLNSYRPHQARETLLSIMNEQIKQKNQSNESIKKALDICKESLMNSFKNLNIEDKQIDSATPLPTNITSPTKNLMSPTKLNNSQDVNMNENNDDDEDKEINWMDQLLDEMLKIN.

Low complexity-rich tracts occupy residues 1 to 27 (MNTSQQQQQQQQQQQQQQQQQQQTPQQ) and 88 to 126 (NNNNNNNNNNNNNNNNNNNNNNNNNNNNNNNNNNNNNNN). Disordered stretches follow at residues 1–130 (MNTS…KATT) and 292–315 (TPLPTNITSPTKNLMSPTKLNNSQ).

Belongs to the Mediator complex subunit 7 family. In terms of assembly, component of the Mediator complex.

The protein localises to the nucleus. Functionally, component of the Mediator complex, a coactivator involved in the regulated transcription of nearly all RNA polymerase II-dependent genes. Mediator functions as a bridge to convey information from gene-specific regulatory proteins to the basal RNA polymerase II transcription machinery. Mediator is recruited to promoters by direct interactions with regulatory proteins and serves as a scaffold for the assembly of a functional preinitiation complex with RNA polymerase II and the general transcription factors. In Dictyostelium discoideum (Social amoeba), this protein is Putative mediator of RNA polymerase II transcription subunit 7 (med7).